We begin with the raw amino-acid sequence, 875 residues long: Alanine--tRNA ligase (875 aa).

4 residues coordinate Zn(2+): H564, H568, C666, and H670.

It belongs to the class-II aminoacyl-tRNA synthetase family. In terms of assembly, homotetramer. Zn(2+) is required as a cofactor.

It localises to the cytoplasm. It carries out the reaction tRNA(Ala) + L-alanine + ATP = L-alanyl-tRNA(Ala) + AMP + diphosphate. Its function is as follows. Catalyzes the attachment of alanine to tRNA(Ala) in a two-step reaction: alanine is first activated by ATP to form Ala-AMP and then transferred to the acceptor end of tRNA(Ala). Also edits incorrectly charged Ser-tRNA(Ala) and Gly-tRNA(Ala) via its editing domain. In Sodalis glossinidius (strain morsitans), this protein is Alanine--tRNA ligase.